The following is a 570-amino-acid chain: MEAPEEPAPVRGGPEATLEIHGSRFLRLSAFREELRALLVLAGPAFLVQLMVFLISFISSVFCGHLGKLELDAVTLAIAVINVTGVSVGFGLSSACDTLISQTYGSQNLKHVGVILQRSALILLLCCFPCWALFLNTQHILLLFRQDPDVSRLTQTYVTIFIPALPATFLYMLQVKYLLNQGIVLPQIVTGVAANLVNALANYLFLHQLHLGAIGSALANLISQYTLALLLFFYILGKKLHQATWGGWSLECLQDWASFLHLAVPSMLMLCMEWWAYEVGSFLSGILGMVELGAQSIVYELAIIVYMVPAGFSVAASVRVGNALGAGDMEQARKSSTVSLLITVLFAVAFSVLLLSCKDHVGYIFTTDRDIINLVAQVVPIYAVSHLFEALACTSGGVLRGSGNQKVGAIVNTIGYYVVGLPIGIALMFATKLGVMGLWSGIIICTVFQAVCFLGFIIQLNWKKACQQAQVHANLKVNNVPRSGNSALPQDPLHPGCPENLEGILTNDVGKTGETQSDQQMRQEEPLPEHPQDSAKLSRKQLVLRRGLLLLGVFLILLVGILVRFYVRIQ.

An N-acetylmethionine modification is found at Met-1. The Cytoplasmic portion of the chain corresponds to 1–37; that stretch reads MEAPEEPAPVRGGPEATLEIHGSRFLRLSAFREELRA. A helical transmembrane segment spans residues 38-58; the sequence is LLVLAGPAFLVQLMVFLISFI. Residues 59 to 72 lie on the Extracellular side of the membrane; it reads SSVFCGHLGKLELD. Residues 73–93 traverse the membrane as a helical segment; sequence AVTLAIAVINVTGVSVGFGLS. Over 94-120 the chain is Cytoplasmic; sequence SACDTLISQTYGSQNLKHVGVILQRSA. Residues 121-141 form a helical membrane-spanning segment; that stretch reads LILLLCCFPCWALFLNTQHIL. Over 142-152 the chain is Extracellular; the sequence is LLFRQDPDVSR. Residues 153–173 traverse the membrane as a helical segment; that stretch reads LTQTYVTIFIPALPATFLYML. Over 174–176 the chain is Cytoplasmic; it reads QVK. The helical transmembrane segment at 177–197 threads the bilayer; the sequence is YLLNQGIVLPQIVTGVAANLV. The Extracellular segment spans residues 198-216; the sequence is NALANYLFLHQLHLGAIGS. Residues 217 to 237 form a helical membrane-spanning segment; that stretch reads ALANLISQYTLALLLFFYILG. The Cytoplasmic segment spans residues 238–251; it reads KKLHQATWGGWSLE. A helical membrane pass occupies residues 252-272; the sequence is CLQDWASFLHLAVPSMLMLCM. Topologically, residues 273–295 are extracellular; sequence EWWAYEVGSFLSGILGMVELGAQ. Residues 296–316 form a helical membrane-spanning segment; that stretch reads SIVYELAIIVYMVPAGFSVAA. At 317–336 the chain is on the cytoplasmic side; it reads SVRVGNALGAGDMEQARKSS. A helical membrane pass occupies residues 337 to 357; sequence TVSLLITVLFAVAFSVLLLSC. The Extracellular portion of the chain corresponds to 358 to 370; it reads KDHVGYIFTTDRD. The chain crosses the membrane as a helical span at residues 371–391; sequence IINLVAQVVPIYAVSHLFEAL. The Cytoplasmic segment spans residues 392–408; that stretch reads ACTSGGVLRGSGNQKVG. The chain crosses the membrane as a helical span at residues 409–429; the sequence is AIVNTIGYYVVGLPIGIALMF. Over 430 to 437 the chain is Extracellular; it reads ATKLGVMG. A helical transmembrane segment spans residues 438 to 458; the sequence is LWSGIIICTVFQAVCFLGFII. Residues 459–546 are Cytoplasmic-facing; that stretch reads QLNWKKACQQ…LSRKQLVLRR (88 aa). A disordered region spans residues 508 to 534; that stretch reads DVGKTGETQSDQQMRQEEPLPEHPQDS. A compositionally biased stretch (basic and acidic residues) spans 521-533; that stretch reads MRQEEPLPEHPQD. Residues 547–567 traverse the membrane as a helical segment; sequence GLLLLGVFLILLVGILVRFYV. Residues 568-570 lie on the Extracellular side of the membrane; that stretch reads RIQ.

This sequence belongs to the multi antimicrobial extrusion (MATE) (TC 2.A.66.1) family.

The protein localises to the cell membrane. Its subcellular location is the apical cell membrane. It carries out the reaction thiamine(out) + H(+)(in) = thiamine(in) + H(+)(out). It catalyses the reaction estrone 3-sulfate(in) + H(+)(out) = estrone 3-sulfate(out) + H(+)(in). The catalysed reaction is creatinine(in) + H(+)(out) = creatinine(out) + H(+)(in). The enzyme catalyses agmatine(in) + H(+)(out) = agmatine(out) + H(+)(in). In terms of biological role, multidrug efflux pump that functions as a H(+)/organic cation antiporter. Plays a physiological role in the excretion of cationic compounds including endogenous metabolites, drugs, toxins through the kidney and liver, into urine and bile respectively. Mediates the efflux of endogenous compounds such as creatinine, vitamin B1/thiamine, agmatine and estrone-3-sulfate. May also contribute to regulate the transport of cationic compounds in testis across the blood-testis-barrier. In Pongo abelii (Sumatran orangutan), this protein is Multidrug and toxin extrusion protein 1 (SLC47A1).